The following is a 220-amino-acid chain: Charged multivesicular body protein 2a (220 aa).

Coiled coils occupy residues 12–53 (EEML…MAKQ) and 199–220 (PSAA…LRRD). The disordered stretch occupies residues 179-208 (LSNLPSTGGSLSVAGAKKGEPSAALADADA). The short motif at 208-218 (ADLEERLNNLR) is the MIT-interacting motif element.

It belongs to the SNF7 family. As to quaternary structure, probable core component of the endosomal sorting required for transport complex III (ESCRT-III). ESCRT-III components are thought to multimerize to form a flat lattice on the perimeter membrane of the endosome.

The protein resides in the late endosome membrane. Its subcellular location is the cytoplasm. In terms of biological role, probable core component of the endosomal sorting required for transport complex III (ESCRT-III) which is involved in multivesicular bodies (MVBs) formation and sorting of endosomal cargo proteins into MVBs. MVBs contain intraluminal vesicles (ILVs) that are generated by invagination and scission from the limiting membrane of the endosome and mostly are delivered to lysosomes enabling degradation of membrane proteins, such as stimulated growth factor receptors, lysosomal enzymes and lipids. This is Charged multivesicular body protein 2a (chmp2a) from Xenopus tropicalis (Western clawed frog).